A 382-amino-acid polypeptide reads, in one-letter code: 1-deoxy-D-xylulose 5-phosphate reductoisomerase (382 aa).

NADPH is bound by residues Thr-10, Gly-11, Ser-12, Ile-13, Gly-36, and Asn-122. Position 123 (Lys-123) interacts with 1-deoxy-D-xylulose 5-phosphate. Glu-124 is a binding site for NADPH. Asp-148 serves as a coordination point for Mn(2+). The 1-deoxy-D-xylulose 5-phosphate site is built by Ser-149, Glu-150, Ser-174, and His-197. Mn(2+) is bound at residue Glu-150. Gly-203 lines the NADPH pocket. 1-deoxy-D-xylulose 5-phosphate is bound by residues Ser-210, Asn-215, Lys-216, and Glu-219. Glu-219 lines the Mn(2+) pocket.

The protein belongs to the DXR family. The cofactor is Mg(2+). It depends on Mn(2+) as a cofactor.

It carries out the reaction 2-C-methyl-D-erythritol 4-phosphate + NADP(+) = 1-deoxy-D-xylulose 5-phosphate + NADPH + H(+). It functions in the pathway isoprenoid biosynthesis; isopentenyl diphosphate biosynthesis via DXP pathway; isopentenyl diphosphate from 1-deoxy-D-xylulose 5-phosphate: step 1/6. Its function is as follows. Catalyzes the NADPH-dependent rearrangement and reduction of 1-deoxy-D-xylulose-5-phosphate (DXP) to 2-C-methyl-D-erythritol 4-phosphate (MEP). The sequence is that of 1-deoxy-D-xylulose 5-phosphate reductoisomerase from Chlorobium chlorochromatii (strain CaD3).